A 617-amino-acid polypeptide reads, in one-letter code: Zinc finger protein 613 (617 aa).

In terms of domain architecture, KRAB spans 8–78 (LTLEDVAVEF…ENEIHSQICP (71 aa)). C2H2-type zinc fingers lie at residues 204–226 (HVCT…QRVH), 232–254 (HGCS…QRNH), 260–282 (YECT…QKIH), 288–310 (YICS…QRVH), 316–338 (HGCS…QRTH), 344–366 (YECT…QKAH), 372–394 (YICR…QRIH), 400–422 (YICN…RRTH), 428–450 (YVCN…QRFH), 456–478 (FVCT…QRIH), 484–506 (YTCS…RRTH), and 512–535 (YGCS…GMLH).

Belongs to the krueppel C2H2-type zinc-finger protein family.

The protein resides in the nucleus. Its function is as follows. May be involved in transcriptional regulation. This Homo sapiens (Human) protein is Zinc finger protein 613 (ZNF613).